Reading from the N-terminus, the 339-residue chain is NADH-quinone oxidoreductase subunit H (339 aa).

The next 9 membrane-spanning stretches (helical) occupy residues 9 to 29 (IFPL…LILC), 50 to 70 (PNVV…KLLF), 82 to 102 (ILFI…WAVI), 115 to 135 (VGVL…IIAG), 161 to 181 (MGLV…SGII), 187 to 207 (MPWW…ISVL), 235 to 255 (MGFA…SAMT), 275 to 295 (IPGF…FLWI), and 311 to 331 (GWKV…SVLV).

This sequence belongs to the complex I subunit 1 family. As to quaternary structure, NDH-1 is composed of 14 different subunits. Subunits NuoA, H, J, K, L, M, N constitute the membrane sector of the complex.

Its subcellular location is the cell inner membrane. It catalyses the reaction a quinone + NADH + 5 H(+)(in) = a quinol + NAD(+) + 4 H(+)(out). Functionally, NDH-1 shuttles electrons from NADH, via FMN and iron-sulfur (Fe-S) centers, to quinones in the respiratory chain. The immediate electron acceptor for the enzyme in this species is believed to be ubiquinone. Couples the redox reaction to proton translocation (for every two electrons transferred, four hydrogen ions are translocated across the cytoplasmic membrane), and thus conserves the redox energy in a proton gradient. This subunit may bind ubiquinone. This chain is NADH-quinone oxidoreductase subunit H, found in Rickettsia conorii (strain ATCC VR-613 / Malish 7).